Here is an 896-residue protein sequence, read N- to C-terminus: Phosphatidate phosphatase LPIN2 (896 aa).

Positions 1–108 (MNYVGQLAGQ…LPAYLATSPI (108 aa)) are N-LIP. Ser-106 bears the Phosphoserine mark. The interval 120–208 (TPLVKSGGDE…SSNASLKEEE (89 aa)) is disordered. A compositionally biased stretch (basic residues) spans 152–162 (VKKKKRRRKKY). Residues 153–158 (KKKKRR) carry the Nuclear localization signal motif. Phosphoserine is present on residues Ser-174, Ser-186, Ser-187, Ser-243, and Ser-303. 2 disordered regions span residues 370-405 (AEAPSESKPAAKVDSPSKKKGVHKRSQHQGPDDIYL) and 420-459 (FPKSESEPGSRQWPESDTLSGSQSPQSVGSAAADSGTECL). Basic residues predominate over residues 387–396 (KKKGVHKRSQ). A compositionally biased stretch (polar residues) spans 426–448 (EPGSRQWPESDTLSGSQSPQSVG). Ser-566 carries the post-translational modification Phosphoserine. Basic and acidic residues predominate over residues 569–579 (KQLPESKEGKS). Residues 569-636 (KQLPESKEGK…LSHGSTTSYK (68 aa)) are disordered. The segment covering 604–617 (SSSDEGSQELEESI) has biased composition (acidic residues). Positions 635–837 (YKKSLRLSSD…RIFTVNPKGE (203 aa)) are C-LIP. A DXDXT motif motif is present at residues 689 to 693 (DIDGT). An LXXIL motif motif is present at residues 700–704 (LGQIL).

The protein belongs to the lipin family. Mg(2+) serves as cofactor. As to expression, expressed in liver, lung, kidney, placenta, spleen, thymus, lymph node, prostate, testes, small intestine, and colon.

Its subcellular location is the nucleus. The protein localises to the cytoplasm. It localises to the cytosol. It is found in the endoplasmic reticulum membrane. It carries out the reaction a 1,2-diacyl-sn-glycero-3-phosphate + H2O = a 1,2-diacyl-sn-glycerol + phosphate. With respect to regulation, inhibited by N-ethylmaleimide. Functionally, acts as a magnesium-dependent phosphatidate phosphatase enzyme which catalyzes the conversion of phosphatidic acid to diacylglycerol during triglyceride, phosphatidylcholine and phosphatidylethanolamine biosynthesis in the endoplasmic reticulum membrane. Plays important roles in controlling the metabolism of fatty acids at different levels. Also acts as a nuclear transcriptional coactivator for PPARGC1A to modulate lipid metabolism. The chain is Phosphatidate phosphatase LPIN2 from Homo sapiens (Human).